We begin with the raw amino-acid sequence, 227 residues long: Cytochrome c oxidase subunit 2 (227 aa).

At 1 to 14 (MAYPFQLGLQDATS) the chain is on the mitochondrial intermembrane side. The helical transmembrane segment at 15 to 45 (PIMEELMNFHDHTLMIVFLISSLVLYIISLM) threads the bilayer. Residues 46 to 59 (LTTKLTHTSTMDAQ) are Mitochondrial matrix-facing. A helical membrane pass occupies residues 60–87 (EVETIWTILPAVILILIALPSLRILYMM). The Mitochondrial intermembrane segment spans residues 88 to 227 (DEINNPVLTV…NFENWSTSMI (140 aa)). 6 residues coordinate Cu cation: H161, C196, E198, C200, H204, and M207. Position 198 (E198) interacts with Mg(2+).

It belongs to the cytochrome c oxidase subunit 2 family. Component of the cytochrome c oxidase (complex IV, CIV), a multisubunit enzyme composed of 14 subunits. The complex is composed of a catalytic core of 3 subunits MT-CO1, MT-CO2 and MT-CO3, encoded in the mitochondrial DNA, and 11 supernumerary subunits COX4I, COX5A, COX5B, COX6A, COX6B, COX6C, COX7A, COX7B, COX7C, COX8 and NDUFA4, which are encoded in the nuclear genome. The complex exists as a monomer or a dimer and forms supercomplexes (SCs) in the inner mitochondrial membrane with NADH-ubiquinone oxidoreductase (complex I, CI) and ubiquinol-cytochrome c oxidoreductase (cytochrome b-c1 complex, complex III, CIII), resulting in different assemblies (supercomplex SCI(1)III(2)IV(1) and megacomplex MCI(2)III(2)IV(2)). Found in a complex with TMEM177, COA6, COX18, COX20, SCO1 and SCO2. Interacts with TMEM177 in a COX20-dependent manner. Interacts with COX20. Interacts with COX16. The cofactor is Cu cation.

The protein resides in the mitochondrion inner membrane. It catalyses the reaction 4 Fe(II)-[cytochrome c] + O2 + 8 H(+)(in) = 4 Fe(III)-[cytochrome c] + 2 H2O + 4 H(+)(out). Functionally, component of the cytochrome c oxidase, the last enzyme in the mitochondrial electron transport chain which drives oxidative phosphorylation. The respiratory chain contains 3 multisubunit complexes succinate dehydrogenase (complex II, CII), ubiquinol-cytochrome c oxidoreductase (cytochrome b-c1 complex, complex III, CIII) and cytochrome c oxidase (complex IV, CIV), that cooperate to transfer electrons derived from NADH and succinate to molecular oxygen, creating an electrochemical gradient over the inner membrane that drives transmembrane transport and the ATP synthase. Cytochrome c oxidase is the component of the respiratory chain that catalyzes the reduction of oxygen to water. Electrons originating from reduced cytochrome c in the intermembrane space (IMS) are transferred via the dinuclear copper A center (CU(A)) of subunit 2 and heme A of subunit 1 to the active site in subunit 1, a binuclear center (BNC) formed by heme A3 and copper B (CU(B)). The BNC reduces molecular oxygen to 2 water molecules using 4 electrons from cytochrome c in the IMS and 4 protons from the mitochondrial matrix. The polypeptide is Cytochrome c oxidase subunit 2 (MT-CO2) (Apodemus mystacinus (Broad-toothed field mouse)).